We begin with the raw amino-acid sequence, 439 residues long: Tol-Pal system protein TolB (439 aa).

The signal sequence occupies residues 1–21 (MRFRLALSLLSLALFAAPAAA).

Belongs to the TolB family. The Tol-Pal system is composed of five core proteins: the inner membrane proteins TolA, TolQ and TolR, the periplasmic protein TolB and the outer membrane protein Pal. They form a network linking the inner and outer membranes and the peptidoglycan layer.

The protein localises to the periplasm. Part of the Tol-Pal system, which plays a role in outer membrane invagination during cell division and is important for maintaining outer membrane integrity. This Rhizorhabdus wittichii (strain DSM 6014 / CCUG 31198 / JCM 15750 / NBRC 105917 / EY 4224 / RW1) (Sphingomonas wittichii) protein is Tol-Pal system protein TolB.